The following is a 158-amino-acid chain: NADH-quinone oxidoreductase subunit B (158 aa).

Residues cysteine 37, cysteine 38, cysteine 102, and cysteine 132 each contribute to the [4Fe-4S] cluster site.

The protein belongs to the complex I 20 kDa subunit family. NDH-1 is composed of 14 different subunits. Subunits NuoB, C, D, E, F, and G constitute the peripheral sector of the complex. It depends on [4Fe-4S] cluster as a cofactor.

It localises to the cell inner membrane. It catalyses the reaction a quinone + NADH + 5 H(+)(in) = a quinol + NAD(+) + 4 H(+)(out). Its function is as follows. NDH-1 shuttles electrons from NADH, via FMN and iron-sulfur (Fe-S) centers, to quinones in the respiratory chain. Couples the redox reaction to proton translocation (for every two electrons transferred, four hydrogen ions are translocated across the cytoplasmic membrane), and thus conserves the redox energy in a proton gradient. In Alkalilimnicola ehrlichii (strain ATCC BAA-1101 / DSM 17681 / MLHE-1), this protein is NADH-quinone oxidoreductase subunit B.